A 403-amino-acid polypeptide reads, in one-letter code: 26S proteasome regulatory subunit 8 (403 aa).

186–193 (GPPGTGKT) provides a ligand contact to ATP.

The protein belongs to the AAA ATPase family.

It localises to the cytoplasm. The protein resides in the nucleus. In terms of biological role, the 26S proteasome is involved in the ATP-dependent degradation of ubiquitinated proteins. The regulatory (or ATPase) complex confers ATP dependency and substrate specificity to the 26S complex. The polypeptide is 26S proteasome regulatory subunit 8 (psmC5) (Dictyostelium discoideum (Social amoeba)).